The primary structure comprises 1168 residues: Transcription-repair-coupling factor (1168 aa).

The Helicase ATP-binding domain maps to 633–794 (DMQKSRPMDR…MLGVRDLSVI (162 aa)). Residue 646 to 653 (GDVGYGKT) coordinates ATP. Residues 747–750 (DEEQ) carry the DEEQ box motif. In terms of domain architecture, Helicase C-terminal spans 808–969 (VLEQNMSFIK…GFKIAMRDLN (162 aa)).

It in the N-terminal section; belongs to the UvrB family. In the C-terminal section; belongs to the helicase family. RecG subfamily.

It localises to the cytoplasm. In terms of biological role, couples transcription and DNA repair by recognizing RNA polymerase (RNAP) stalled at DNA lesions. Mediates ATP-dependent release of RNAP and its truncated transcript from the DNA, and recruitment of nucleotide excision repair machinery to the damaged site. The protein is Transcription-repair-coupling factor of Staphylococcus aureus (strain MRSA252).